Consider the following 361-residue polypeptide: Septin-2 (361 aa).

Tyr-17 is modified (phosphotyrosine). The region spanning 34-306 (KGFEFTLMVV…ENFRSERLKR (273 aa)) is the Septin-type G domain. The tract at residues 44 to 51 (GESGLGKS) is G1 motif. Residues 44–51 (GESGLGKS), Thr-78, Gly-104, and 183–191 (KADTLTLKE) contribute to the GTP site. Residues 101–104 (DTPG) form a G3 motif region. The interval 182 to 185 (AKAD) is G4 motif. Lys-190 is modified (N6-acetyllysine). Tyr-211 is modified (phosphotyrosine). Ser-218 bears the Phosphoserine mark. Gly-241 and Arg-256 together coordinate GTP. The interval 260–270 (WGVVEVENPEH) is important for dimerization.

The protein belongs to the TRAFAC class TrmE-Era-EngA-EngB-Septin-like GTPase superfamily. Septin GTPase family. As to quaternary structure, septins polymerize into heterooligomeric protein complexes that form filaments, and associate with cellular membranes, actin filaments and microtubules. GTPase activity is required for filament formation. Septin filaments are assembled from asymmetrical heterotrimers, composed of SEPTIN2, SEPTIN6 and SEPTIN7 that associate head-to-head to form a hexameric unit. Interaction between SEPTIN2 and SEPTIN7 seems indirect. Also interacts with SEPTIN9 and SEPTIN5. Interaction with SEPTIN4 not detected. Component of a septin core octameric complex consisting of SEPTIN12, SEPTIN7, SEPTIN6 and SEPTIN2 or SEPTIN4 in the order 12-7-6-2-2-6-7-12 or 12-7-6-4-4-6-7-12 and located in the sperm annulus. Interacts with MAP4. Interacts with DZIP1L.

The protein localises to the cytoplasm. The protein resides in the cytoskeleton. It is found in the spindle. It localises to the cleavage furrow. Its subcellular location is the midbody. The protein localises to the cell cortex. The protein resides in the cell projection. It is found in the cilium membrane. It localises to the cilium. Its subcellular location is the flagellum. Its function is as follows. Filament-forming cytoskeletal GTPase. Forms a filamentous structure with SEPTIN12, SEPTIN6, SEPTIN2 and probably SEPTIN4 at the sperm annulus which is required for the structural integrity and motility of the sperm tail during postmeiotic differentiation. Required for normal organization of the actin cytoskeleton. Plays a role in the biogenesis of polarized columnar-shaped epithelium by maintaining polyglutamylated microtubules, thus facilitating efficient vesicle transport, and by impeding MAP4 binding to tubulin. Required for the progression through mitosis. Forms a scaffold at the midplane of the mitotic splindle required to maintain CENPE localization at kinetochores and consequently chromosome congression. During anaphase, may be required for chromosome segregation and spindle elongation. Plays a role in ciliogenesis and collective cell movements. In cilia, required for the integrity of the diffusion barrier at the base of the primary cilium that prevents diffusion of transmembrane proteins between the cilia and plasma membranes: probably acts by regulating the assembly of the tectonic-like complex (also named B9 complex) by localizing TMEM231 protein. This Rattus norvegicus (Rat) protein is Septin-2.